A 1149-amino-acid chain; its full sequence is Probable phospholipid-transporting ATPase IA (1149 aa).

At Met1 to Leu65 the chain is on the cytoplasmic side. Residue Ser25 is modified to Phosphoserine. At Thr28 the chain carries Phosphothreonine. Ser29 is subject to Phosphoserine. A helical transmembrane segment spans residues Pro66–Leu86. At Leu87–Asp92 the chain is on the extracellular side. The helical transmembrane segment at Val93–Lys115 threads the bilayer. The Cytoplasmic portion of the chain corresponds to Glu116 to Gln297. The helical transmembrane segment at Ile298 to Trp319 threads the bilayer. The Extracellular segment spans residues Asn320 to Phe344. A helical membrane pass occupies residues Leu345–Val366. Residues Lys367–Lys842 are Cytoplasmic-facing. Asp409 acts as the 4-aspartylphosphate intermediate in catalysis. Residues Asp409, Lys410, Thr411, Glu493, Phe534, Lys557, Arg590, Thr670, Gly671, Asp672, Ala726–Thr733, Arg760, and Lys766 each bind ATP. Asp409 contributes to the Mg(2+) binding site. Thr411 contributes to the Mg(2+) binding site. A Mg(2+)-binding site is contributed by Asp786. The ATP site is built by Asn789 and Asp790. Asp790 lines the Mg(2+) pocket. Residues Cys843–Phe863 traverse the membrane as a helical segment. Residues Val864–Arg875 lie on the Extracellular side of the membrane. The chain crosses the membrane as a helical span at residues Trp876–Ile895. Residues Phe896–Val925 lie on the Cytoplasmic side of the membrane. Residues Phe926 to Ala947 form a helical membrane-spanning segment. Topologically, residues Leu948–Asp961 are extracellular. A helical membrane pass occupies residues Tyr962 to Glu984. Topologically, residues Thr985–Trp990 are cytoplasmic. A helical membrane pass occupies residues Phe991 to Ser1011. The Extracellular segment spans residues Ser1012–Met1029. A helical membrane pass occupies residues Leu1030–Lys1055. At Val1056–Trp1149 the chain is on the cytoplasmic side. Gly1080 to Ser1087 contacts ATP. The residue at position 1111 (Ser1111) is a Phosphoserine.

Belongs to the cation transport ATPase (P-type) (TC 3.A.3) family. Type IV subfamily. As to quaternary structure, component of a P4-ATPase flippase complex which consists of a catalytic alpha subunit and an accessory beta subunit. Interacts with TMEM30A to form a flippase complex; this complex forms an intermediate phosphoenzyme. Interacts with TMEM30B; this interaction is reported conflictingly. The cofactor is Mg(2+). In terms of processing, cleaved by calpain in a caspase- and calcium influx-dependent manner during platelet apoptosis leading to a 100 kDa polypeptide. As to expression, kidney.

It is found in the cytoplasmic vesicle. The protein localises to the secretory vesicle. The protein resides in the chromaffin granule membrane. Its subcellular location is the cytoplasmic granule. It localises to the cell membrane. It is found in the endoplasmic reticulum. The protein localises to the golgi apparatus. The enzyme catalyses ATP + H2O + phospholipidSide 1 = ADP + phosphate + phospholipidSide 2.. It carries out the reaction a 1,2-diacyl-sn-glycero-3-phospho-L-serine(out) + ATP + H2O = a 1,2-diacyl-sn-glycero-3-phospho-L-serine(in) + ADP + phosphate + H(+). Functionally, catalytic component of a P4-ATPase flippase complex which catalyzes the hydrolysis of ATP coupled to the transport of aminophospholipids from the outer to the inner leaflet of various membranes and ensures the maintenance of asymmetric distribution of phospholipids. Phospholipid translocation also seems to be implicated in vesicle formation and in uptake of lipid signaling molecules. In vitro, its ATPase activity is selectively and stereospecifically stimulated by phosphatidylserine (PS). The flippase complex ATP8A1:TMEM30A seems to play a role in regulation of cell migration probably involving flippase-mediated translocation of phosphatidylethanolamine (PE) at the cell membrane. Acts as aminophospholipid translocase at the cell membrane in neuronal cells. This Bos taurus (Bovine) protein is Probable phospholipid-transporting ATPase IA.